We begin with the raw amino-acid sequence, 819 residues long: Mitosis inhibitor protein kinase SWE1 (819 aa).

Ser36 is modified (phosphoserine; by CDC5). Thr45 carries the phosphothreonine; by CDC28 modification. Residues Ser56 and Ser63 each carry the phosphoserine; by CDC28 modification. Residue Ser70 is modified to Phosphoserine. Thr74 is subject to Phosphothreonine; by CDC28. Positions 86–105 are disordered; it reads KIEEEEEEEEEGKDEESVDS. The segment covering 88–102 has biased composition (acidic residues); sequence EEEEEEEEEGKDEES. Ser102 carries the phosphoserine; by CDC5 modification. Phosphoserine; by CDC28 is present on Ser105. Ser111 is subject to Phosphoserine; by CDC5, CDC28 and CLA4. A disordered region spans residues 117–168; sequence ESVTTPITKRSAEKTNSPISLKQWNQRWFPKNDARTENTSSSSSYSVAKPNQ. Ser118 carries the post-translational modification Phosphoserine; by CDC5. The segment covering 118–142 has biased composition (polar residues); sequence SVTTPITKRSAEKTNSPISLKQWNQ. Thr121 and Thr124 each carry phosphothreonine; by CDC28. Ser127 carries the post-translational modification Phosphoserine; by CDC28. Position 131 is a phosphothreonine; by CDC5 (Thr131). A Phosphoserine; by CDC28 modification is found at Ser133. Ser136 carries the post-translational modification Phosphoserine; by CDC28 and CLA4. Phosphoserine; by CDC5 occurs at positions 156 and 169. Phosphothreonine; by CDC28 is present on Thr196. At Ser201 the chain carries Phosphoserine; by CDC28. Phosphoserine; by CDC5 is present on residues Ser225 and Ser254. Ser262 carries the post-translational modification Phosphoserine. Phosphoserine; by CDC28 is present on residues Ser263 and Ser266. Residues 278–297 are disordered; it reads NQTNILSPTNSLVTNSSPQT. Position 280 is a phosphothreonine; by CDC5 (Thr280). 2 positions are modified to phosphoserine: Ser284 and Ser294. At Ser312 the chain carries Phosphoserine; by CLA4. Residues 341–395 form a disordered region; that stretch reads PIIISSHHSTRKNPQPYQFRGRYDNDTDEEISTPTRRKSIIGATSQTHRESRPLS. Phosphoserine is present on Ser345. 2 positions are modified to phosphothreonine; by CDC28: Thr367 and Thr373. Ser379 is subject to Phosphoserine; by CDC5 and CLA4. A Phosphothreonine; by CDC28 modification is found at Thr384. 2 positions are modified to phosphoserine; by CDC5 and CLA4: Ser395 and Ser438. The region spanning 444-794 is the Protein kinase domain; that stretch reads FTNVHSIGKG…NQILQTEECL (351 aa). ATP is bound by residues 450–458 and Lys473; that span reads IGKGQFSTV. Catalysis depends on Asp579, which acts as the Proton acceptor. Mg(2+) is bound by residues Asn584 and Asp597. Ser610 carries the post-translational modification Phosphoserine; by CDC5. Thr629 carries the post-translational modification Phosphothreonine; by CDC5. Thr688 is subject to Phosphothreonine; by CDC5 and CLA4. Thr692 bears the Phosphothreonine mark. The segment covering 707–716 has biased composition (polar residues); that stretch reads SNNAGTSTVH. The disordered stretch occupies residues 707 to 736; sequence SNNAGTSTVHNNSNINNPNMNNGNDNNNVN. Residues 717–736 are compositionally biased toward low complexity; that stretch reads NNSNINNPNMNNGNDNNNVN. Residue Lys741 forms a Glycyl lysine isopeptide (Lys-Gly) (interchain with G-Cter in ubiquitin) linkage.

The protein belongs to the protein kinase superfamily. Ser/Thr protein kinase family. WEE1 subfamily. Interacts with CLB2-CDC28. Partial hyperphosphorylation of SWE1 by CLB2-CDC28 stabilizes the ternary complex of SWE1 and CLB2-CDC28 and stimulates kinase activity of SWE1 in a positive feedback loop, maintaining CLB2-CDC28 in the tyrosine-phosphorylated state. Fully hyperphosphorylated SWE1 dissociates from CLB2-CDC28. Interacts with HSL7, KCC4 and MET30. Post-translationally, ubiquitinated by the SCF(MET30) complex, leading to its degradation by the proteasome. In terms of processing, phosphorylated progressively by CLA4, CLB2-CDC28 and CDC5. CLA4-dependent phosphorylation occurs in late S phase, followed by phosphorylation by CLB2-CDC28 in early G2, when the levels of mitotic CLB2 increases. This phosphorylation is critical for triggering subsequent SWE1-CDC5 interaction and CDC5-dependent phosphorylation. The resulting cumulative hyperphosphorylation down-regulates SWE1 by targeting it for ubiquitin-mediated degradation. This stepwise phosphorylation is thought to be a mechanism to integrate the different checkpoint requirements before entry into mitosis.

The protein localises to the bud neck. Its subcellular location is the nucleus. It carries out the reaction L-seryl-[protein] + ATP = O-phospho-L-seryl-[protein] + ADP + H(+). The catalysed reaction is L-threonyl-[protein] + ATP = O-phospho-L-threonyl-[protein] + ADP + H(+). Protein kinase that acts as a negative regulator of entry into mitosis (G2 to M transition) by phosphorylating and inhibiting the mitosis-promoting cyclin B-bound CDC28 at 'Tyr-19'. SWE1-mediated inhibition of CDC28 acts in a cell size or morphogenesis checkpoint to delay mitosis in response to defects in growth, actin organization or bud formation. Inhibits the activity of B-type cyclins in replication initiation strongly for CLB2, moderately for CLB3 and CLB4, and there is no apparent inhibition for CLB5 and CLB6, correlating with the normal expression timing of those cyclins. Hyperphosphorylation and degradation of SWE1 when all checkpoint requirement are met releases CLB2-CDC28 from inhibition and allows for progression through the cell cycle. SWE1-dependent CDC28 phosphorylation is also required for pachytene arrest upon activation of the recombination checkpoint during meiosis. Also involved in the regulation of nitrogen starvation- and short chain alcohol-induced filamentous growth, or filamentous differentiation in response to slowed DNA synthesis. Can act both on serines and on tyrosines. In Saccharomyces cerevisiae (strain ATCC 204508 / S288c) (Baker's yeast), this protein is Mitosis inhibitor protein kinase SWE1 (SWE1).